A 398-amino-acid chain; its full sequence is Beta-1,6-galactosyltransferase GALT29A (398 aa).

The Cytoplasmic portion of the chain corresponds to 1-6 (MKRSVR). Residues 7–27 (PLFSALLFAFFAATLICRVAI) traverse the membrane as a helical; Signal-anchor for type II membrane protein segment. Residues 28–398 (RRSSFSFASA…FKIPLVQVYH (371 aa)) are Lumenal-facing. Residues asparagine 221 and asparagine 346 are each glycosylated (N-linked (GlcNAc...) asparagine).

The protein belongs to the glycosyltransferase 29 family. In terms of assembly, interacts with GALT31A.

Its subcellular location is the golgi apparatus membrane. Galactosyltransferase involved in the biosynthesis of type II arabinogalactan. Possesses galactosyltransferase (GalT) activity in vitro, transferring galactose from UDP-galactose to a mixture of various oligosaccharides derived from arabinogalactan proteins. Forms a complex with GALT31A that can work cooperatively to enhance the activities of adding galactose residues at O6 positions to beta-1,6-galactan and beta-1,3-galactan. This is Beta-1,6-galactosyltransferase GALT29A from Arabidopsis thaliana (Mouse-ear cress).